A 473-amino-acid polypeptide reads, in one-letter code: Ribonuclease Y (473 aa).

A helical transmembrane segment spans residues 4 to 24; sequence LIAFIILLILFVLLITIVPVV. The 61-residue stretch at 158-218 folds into the KH domain; sequence SLFNIDIIDE…IRREIARIVM (61 aa). Residues 285–378 form the HD domain; it reads ILSHSLEVAE…VKIVDTLSAA (94 aa).

This sequence belongs to the RNase Y family.

The protein resides in the cell membrane. Endoribonuclease that initiates mRNA decay. The chain is Ribonuclease Y from Ureaplasma parvum serovar 3 (strain ATCC 27815 / 27 / NCTC 11736).